Here is a 195-residue protein sequence, read N- to C-terminus: MPIGVPKVPFRIPGEEDNRLYRERLLFPGQQVDDEIANQLIGIMMYLNGEDENKDIYPYINSPGGAVIPGISIYDAMQFVVPDVHTICMGLAASMGSSVLTGGEITKRIALPHARVMIHQPASSYYDGQAGECIMEAEEVLKLRDSITNVYVQRTGKPLWVISGDMERDVFMSATEAQAYGIVDLVAVENTEDLL.

Ser-94 functions as the Nucleophile in the catalytic mechanism. The active site involves His-119.

It belongs to the peptidase S14 family. Component of the chloroplastic Clp protease core complex.

The protein resides in the plastid. Its subcellular location is the chloroplast stroma. It catalyses the reaction Hydrolysis of proteins to small peptides in the presence of ATP and magnesium. alpha-casein is the usual test substrate. In the absence of ATP, only oligopeptides shorter than five residues are hydrolyzed (such as succinyl-Leu-Tyr-|-NHMec, and Leu-Tyr-Leu-|-Tyr-Trp, in which cleavage of the -Tyr-|-Leu- and -Tyr-|-Trp bonds also occurs).. In terms of biological role, cleaves peptides in various proteins in a process that requires ATP hydrolysis. Has a chymotrypsin-like activity. Plays a major role in the degradation of misfolded proteins. The sequence is that of ATP-dependent Clp protease proteolytic subunit from Cycas taitungensis (Prince sago).